We begin with the raw amino-acid sequence, 263 residues long: 3'-5' ssDNA/RNA exonuclease TatD (263 aa).

Positions 91, 127, and 152 each coordinate a divalent metal cation.

Belongs to the metallo-dependent hydrolases superfamily. TatD-type hydrolase family. TatD subfamily. As to quaternary structure, monomer. Requires Mg(2+) as cofactor.

The protein resides in the cytoplasm. In terms of biological role, 3'-5' exonuclease that prefers single-stranded DNA and RNA. May play a role in the H(2)O(2)-induced DNA damage repair. This Cronobacter turicensis (strain DSM 18703 / CCUG 55852 / LMG 23827 / z3032) protein is 3'-5' ssDNA/RNA exonuclease TatD.